A 225-amino-acid chain; its full sequence is MQIRWFGHAAFILESGSLKILIDPWISNPLSPVSLQDVKNLKPTHILVTHDHFDHLGDAIDISKATGAPIVGTYELTLEVAEKGIPEAQTLPMNIGGTIKLGDGVEIYMTQALHTANRGAPSGFVIATPEGTVYHAGDTGLFKDMELIAELYDIDVALLPIGSVFTMGPREAAIAVQLLRPKKVVPMHYNTFPLIKQDPEDFKSRVEAISRVKVYLMKPGDTLRI.

This sequence belongs to the UPF0173 family.

This Pyrobaculum islandicum (strain DSM 4184 / JCM 9189 / GEO3) protein is UPF0173 metal-dependent hydrolase Pisl_0803.